A 189-amino-acid chain; its full sequence is MEKIPYAILEKGSLLLASPDTDQGVFARSVILLCEHSLNGSFGLILNKTLGLELADDIFSFDKVTNNNIRFCMGGPLQANQMMLLHSCSEIPEQTLEICPSVYLGGDLSFLQEIAASDAGPMINLCFGYSGWQAGQLEREFLDGNWFLAPASYDYVFMDNPENLWSKILKDLGGKYASLSTVPENLFLN.

The protein belongs to the UPF0301 (AlgH) family.

This Chlamydia felis (strain Fe/C-56) (Chlamydophila felis) protein is UPF0301 protein CF0373.